A 395-amino-acid chain; its full sequence is uncharacterized protein (395 aa).

Disordered regions lie at residues 1-121 (MLLP…TANS), 136-187 (MRMK…LDRN), 308-335 (QNNE…SKDE), and 365-395 (IQKF…NEGD). Residues 13–28 (PKGEAKSLVARERKSQ) show a composition bias toward basic and acidic residues. Residues 64 to 73 (KSAKLRRKKS) are compositionally biased toward basic residues. The segment covering 97-111 (SIEKKKEEMTSKLPE) has biased composition (basic and acidic residues). The segment covering 144–164 (TSRMATKSDSSLETMPESSHN) has biased composition (polar residues). A compositionally biased stretch (basic residues) spans 170–179 (KSRKSQRTRG). The segment covering 365–377 (IQKFRKKYQKQLK) has biased composition (basic residues). Basic and acidic residues predominate over residues 378-395 (KSQEEKKDDTKTAKNEGD).

This is an uncharacterized protein from Caenorhabditis elegans.